The sequence spans 309 residues: Putative proline iminopeptidase (309 aa).

In terms of domain architecture, AB hydrolase-1 spans 33–291 (LYVHGGPGSG…LYVTNNAGHS (259 aa)). Ser-105 functions as the Nucleophile in the catalytic mechanism. Asp-262 is an active-site residue. The active-site Proton donor is His-290.

It belongs to the peptidase S33 family.

Its subcellular location is the cytoplasm. It carries out the reaction Release of N-terminal proline from a peptide.. Functionally, specifically catalyzes the removal of N-terminal proline residues from peptides. This chain is Putative proline iminopeptidase (pip), found in Mycoplasma pneumoniae (strain ATCC 29342 / M129 / Subtype 1) (Mycoplasmoides pneumoniae).